A 110-amino-acid chain; its full sequence is UPF0122 protein BCA_3946 (110 aa).

It belongs to the UPF0122 family.

Its function is as follows. Might take part in the signal recognition particle (SRP) pathway. This is inferred from the conservation of its genetic proximity to ftsY/ffh. May be a regulatory protein. The polypeptide is UPF0122 protein BCA_3946 (Bacillus cereus (strain 03BB102)).